We begin with the raw amino-acid sequence, 803 residues long: Urocanate reductase (803 aa).

Serine 258 is modified (FMN phosphoryl serine). FAD is bound by residues alanine 311, glutamate 330, asparagine 338, threonine 339, glycine 343, glycine 344, and aspartate 573. Arginine 632 acts as the Proton donor in catalysis. FAD contacts are provided by histidine 739, glutamate 768, alanine 783, and leucine 784.

The protein belongs to the FAD-dependent oxidoreductase 2 family. FRD/SDH subfamily. Requires FAD as cofactor. The cofactor is FMN.

It carries out the reaction dihydrourocanate + A = urocanate + AH2. In terms of biological role, catalyzes the two-electron reduction of urocanate to dihydrourocanate (also named imidazole propionate or deamino-histidine). Dihydrourocanate is present at higher concentrations in subjects with type 2 diabetes, and directly impairs glucose tolerance and insulin signaling at the level of insulin receptor substrate (IRS) through activation of p38 gamma (MAPK12)-p62-mTORC1. Therefore, the UrdA enzyme from the gut bacteria S.mutans strain UA159 may contribute to the pathogenesis of type 2 diabetes by producing the microbial metabolite dihydrourocanate. The polypeptide is Urocanate reductase (Streptococcus mutans serotype c (strain ATCC 700610 / UA159)).